We begin with the raw amino-acid sequence, 253 residues long: Uroplakin-3b-like protein 1 (253 aa).

Positions 1–26 are cleaved as a signal peptide; sequence MGLGRGQSPLLMALLLLLACLQMGMS. Residues 27–194 lie on the Extracellular side of the membrane; sequence LERISYVPQL…PGPQTAGTVV (168 aa). N-linked (GlcNAc...) asparagine glycosylation is found at Asn-78 and Asn-130. The chain crosses the membrane as a helical span at residues 195–215; the sequence is IIAILSVLLAVLLAALLALLI. The Cytoplasmic portion of the chain corresponds to 216 to 253; that stretch reads FTWYDTCGSTPISGPGELVFVRKYDTHHMSRPSTVGGS.

It belongs to the uroplakin-3 family.

Its subcellular location is the membrane. The chain is Uroplakin-3b-like protein 1 from Bos taurus (Bovine).